The sequence spans 510 residues: D-alanine--D-alanyl carrier protein ligase (510 aa).

An ATP-binding site is contributed by 157–158 (TS). Asp-202 is a binding site for D-alanine. Residue 297–302 (NTYGPT) coordinates ATP. Residue Val-306 participates in D-alanine binding. Residues Asp-389 and Lys-498 each coordinate ATP. Lys-498 serves as a coordination point for D-alanine.

The protein belongs to the ATP-dependent AMP-binding enzyme family. DltA subfamily.

It localises to the cytoplasm. It carries out the reaction holo-[D-alanyl-carrier protein] + D-alanine + ATP = D-alanyl-[D-alanyl-carrier protein] + AMP + diphosphate. Its pathway is cell wall biogenesis; lipoteichoic acid biosynthesis. In terms of biological role, catalyzes the first step in the D-alanylation of lipoteichoic acid (LTA), the activation of D-alanine and its transfer onto the D-alanyl carrier protein (Dcp) DltC. In an ATP-dependent two-step reaction, forms a high energy D-alanyl-AMP intermediate, followed by transfer of the D-alanyl residue as a thiol ester to the phosphopantheinyl prosthetic group of the Dcp. D-alanylation of LTA plays an important role in modulating the properties of the cell wall in Gram-positive bacteria, influencing the net charge of the cell wall. This Listeria welshimeri serovar 6b (strain ATCC 35897 / DSM 20650 / CCUG 15529 / CIP 8149 / NCTC 11857 / SLCC 5334 / V8) protein is D-alanine--D-alanyl carrier protein ligase.